The sequence spans 60 residues: DNA gyrase inhibitor YacG (60 aa).

Zn(2+) contacts are provided by cysteine 15, cysteine 18, cysteine 30, and cysteine 34.

This sequence belongs to the DNA gyrase inhibitor YacG family. In terms of assembly, interacts with GyrB. It depends on Zn(2+) as a cofactor.

Inhibits all the catalytic activities of DNA gyrase by preventing its interaction with DNA. Acts by binding directly to the C-terminal domain of GyrB, which probably disrupts DNA binding by the gyrase. The protein is DNA gyrase inhibitor YacG of Bradyrhizobium diazoefficiens (strain JCM 10833 / BCRC 13528 / IAM 13628 / NBRC 14792 / USDA 110).